A 231-amino-acid chain; its full sequence is Putative transglycosylase H16_A0665 (231 aa).

The helical transmembrane segment at 8-28 threads the bilayer; the sequence is FIKLLVLAVIGGALLAAIAIL.

The protein belongs to the glycosyltransferase 51 family.

It is found in the secreted. It localises to the membrane. It functions in the pathway cell wall biogenesis; peptidoglycan biosynthesis. In terms of biological role, cell wall formation. The chain is Putative transglycosylase H16_A0665 from Cupriavidus necator (strain ATCC 17699 / DSM 428 / KCTC 22496 / NCIMB 10442 / H16 / Stanier 337) (Ralstonia eutropha).